The primary structure comprises 188 residues: dCTP deaminase (188 aa).

DCTP contacts are provided by residues 111 to 116, 135 to 137, glutamine 156, tyrosine 170, and glutamine 180; these read KSTYAR and TLE. Glutamate 137 functions as the Proton donor/acceptor in the catalytic mechanism.

Belongs to the dCTP deaminase family. As to quaternary structure, homotrimer.

It catalyses the reaction dCTP + H2O + H(+) = dUTP + NH4(+). It participates in pyrimidine metabolism; dUMP biosynthesis; dUMP from dCTP (dUTP route): step 1/2. Functionally, catalyzes the deamination of dCTP to dUTP. This is dCTP deaminase from Cupriavidus taiwanensis (strain DSM 17343 / BCRC 17206 / CCUG 44338 / CIP 107171 / LMG 19424 / R1) (Ralstonia taiwanensis (strain LMG 19424)).